The following is a 147-amino-acid chain: Ribonuclease 4 (147 aa).

An N-terminal signal peptide occupies residues 1 to 28; it reads MALQRTHSLLLLLLLTLLGLGLVQPSYG. Position 29 is a pyrrolidone carboxylic acid (Gln29). DUMP is bound by residues Arg35, His40, Lys68, Asn71, and Thr72. Catalysis depends on His40, which acts as the Proton acceptor. Cystine bridges form between Cys53/Cys109, Cys67/Cys120, Cys85/Cys135, and Cys92/Cys99. His144 functions as the Proton donor in the catalytic mechanism. Phe145 is a binding site for dUMP.

Belongs to the pancreatic ribonuclease family. Expressed in the cortical and medullary tubules of the kidney, and in the transitional epithelium of the urinary bladder (at protein level).

The protein localises to the secreted. Its function is as follows. Cleaves preferentially after uridine bases. Has antimicrobial activity against uropathogenic E.coli (UPEC). Probably contributes to urinary tract sterility. This Homo sapiens (Human) protein is Ribonuclease 4 (RNASE4).